The primary structure comprises 400 residues: Elongation factor Tu 2 (400 aa).

One can recognise a tr-type G domain in the interval K10–Q209. Residues G19–T26 are G1. Residue G19–T26 coordinates GTP. T26 is a Mg(2+) binding site. The tract at residues G60–N64 is G2. The tract at residues D81 to G84 is G3. GTP-binding positions include D81 to H85 and N136 to D139. The segment at N136–D139 is G4. The interval S174–L176 is G5.

Belongs to the TRAFAC class translation factor GTPase superfamily. Classic translation factor GTPase family. EF-Tu/EF-1A subfamily. As to quaternary structure, monomer.

Its subcellular location is the cytoplasm. The enzyme catalyses GTP + H2O = GDP + phosphate + H(+). GTP hydrolase that promotes the GTP-dependent binding of aminoacyl-tRNA to the A-site of ribosomes during protein biosynthesis. The polypeptide is Elongation factor Tu 2 (Syntrophomonas wolfei subsp. wolfei (strain DSM 2245B / Goettingen)).